Here is a 219-residue protein sequence, read N- to C-terminus: Biofilm-associated metzincin protease inhibitor (219 aa).

The chain crosses the membrane as a helical span at residues 4-24 (TWIYAASAAAIGGALIGGWLL). Residues 191–204 (DIAARSDPHGDHVD) are compositionally biased toward basic and acidic residues. Residues 191-219 (DIAARSDPHGDHVDAPLAELPPMPPPAQG) form a disordered region. The span at 209-219 (ELPPMPPPAQG) shows a compositional bias: pro residues.

The protein localises to the cell membrane. In terms of biological role, inhibitor of the metalloendopeptidase Mep72. Forms a protein-protein complex with the protease, which is the product of its coregulated adjacent gene, and probably prevents premature protease activity until the protein has been secreted. This is Biofilm-associated metzincin protease inhibitor from Pseudomonas aeruginosa (strain ATCC 15692 / DSM 22644 / CIP 104116 / JCM 14847 / LMG 12228 / 1C / PRS 101 / PAO1).